Consider the following 351-residue polypeptide: sn-glycerol-3-phosphate import ATP-binding protein UgpC (351 aa).

Residues 4-235 (IVLDNVRKSY…PASTFVATFI (232 aa)) form the ABC transporter domain. Residue 37–44 (GPSGCGKS) participates in ATP binding.

It belongs to the ABC transporter superfamily. sn-glycerol-3-phosphate importer (TC 3.A.1.1.3) family. The complex is composed of two ATP-binding proteins (UgpC), two transmembrane proteins (UgpA and UgpE) and a solute-binding protein (UgpB).

Its subcellular location is the cell inner membrane. The catalysed reaction is sn-glycerol 3-phosphate(out) + ATP + H2O = sn-glycerol 3-phosphate(in) + ADP + phosphate + H(+). Functionally, part of the ABC transporter complex UgpBAEC involved in sn-glycerol-3-phosphate (G3P) import. Responsible for energy coupling to the transport system. This chain is sn-glycerol-3-phosphate import ATP-binding protein UgpC, found in Brucella abortus (strain 2308).